We begin with the raw amino-acid sequence, 571 residues long: Ubiquitin-like-specific protease 1C (571 aa).

Residues 221-260 form a disordered region; sequence SESKDPKGDRRPNEAYGKGKPNESSPYLLVDDDDGDDDKV. Over residues 222 to 233 the composition is skewed to basic and acidic residues; the sequence is ESKDPKGDRRPN. Active-site residues include His-426, Asp-449, and Cys-512.

This sequence belongs to the peptidase C48 family.

The protein resides in the nucleus. Its subcellular location is the nucleoplasm. Its function is as follows. Protease that catalyzes two essential functions in the SUMO pathway: processing of full-length SUMOs to their mature forms and deconjugation of SUMO from targeted proteins. Cleaves precursors of SUM1 and SUM2, but not of SUM3 or SUM5. Able to release SUM1 and SUM2 from conjugates, but unable to cleave SUM3. Protease activity mainly directed at deconjugating SUM1 and SUM2 from their target proteins. Regulates salt stress responses and flowering time. Redundant with ULP1D. The polypeptide is Ubiquitin-like-specific protease 1C (ULP1C) (Arabidopsis thaliana (Mouse-ear cress)).